We begin with the raw amino-acid sequence, 373 residues long: Probable cysteine protease RD19C (373 aa).

The signal sequence occupies residues 1–20 (MDRVVFFFLIAATLLAGSLG). Positions 21–139 (STVISGEVTD…QTAPILPTSD (119 aa)) are cleaved as a propeptide — activation peptide. 2 cysteine pairs are disulfide-bonded: Cys-161-Cys-211 and Cys-195-Cys-245. Cys-164 is an active-site residue. N-linked (GlcNAc...) asparagine glycosylation is present at Asn-258. A disulfide bridge connects residues Cys-301 and Cys-356. Residues His-307 and Asn-334 contribute to the active site.

The protein belongs to the peptidase C1 family.

It localises to the lytic vacuole. Its function is as follows. Probable thiol protease. This is Probable cysteine protease RD19C from Arabidopsis thaliana (Mouse-ear cress).